The primary structure comprises 944 residues: UvrABC system protein A (944 aa).

33-40 (GLSGSGKS) contacts ATP. A C4-type zinc finger spans residues 252–279 (CPICGFSIGELEPRMFSFNSPFGACPTC). 2 ABC transporter domains span residues 309–587 (WEPT…KKSL) and 607–935 (ITDR…QYLK). 639-646 (GVSGSGKS) is a binding site for ATP. The segment at 738-764 (CEACKGDGIIKIEMHFLPDVYVPCEVC) adopts a C4-type zinc-finger fold.

This sequence belongs to the ABC transporter superfamily. UvrA family. In terms of assembly, forms a heterotetramer with UvrB during the search for lesions.

The protein localises to the cytoplasm. Functionally, the UvrABC repair system catalyzes the recognition and processing of DNA lesions. UvrA is an ATPase and a DNA-binding protein. A damage recognition complex composed of 2 UvrA and 2 UvrB subunits scans DNA for abnormalities. When the presence of a lesion has been verified by UvrB, the UvrA molecules dissociate. The chain is UvrABC system protein A from Staphylococcus epidermidis (strain ATCC 12228 / FDA PCI 1200).